A 337-amino-acid chain; its full sequence is Phosphate acyltransferase (337 aa).

Belongs to the PlsX family. In terms of assembly, homodimer. Probably interacts with PlsY.

The protein localises to the cytoplasm. It catalyses the reaction a fatty acyl-[ACP] + phosphate = an acyl phosphate + holo-[ACP]. The protein operates within lipid metabolism; phospholipid metabolism. Functionally, catalyzes the reversible formation of acyl-phosphate (acyl-PO(4)) from acyl-[acyl-carrier-protein] (acyl-ACP). This enzyme utilizes acyl-ACP as fatty acyl donor, but not acyl-CoA. This Aromatoleum aromaticum (strain DSM 19018 / LMG 30748 / EbN1) (Azoarcus sp. (strain EbN1)) protein is Phosphate acyltransferase.